The primary structure comprises 235 residues: Glucosamine-6-phosphate deaminase (235 aa).

Asp62 serves as the catalytic Proton acceptor; for enolization step. Asn128 serves as the catalytic For ring-opening step. His130 serves as the catalytic Proton acceptor; for ring-opening step. The active-site For ring-opening step is Glu135.

This sequence belongs to the glucosamine/galactosamine-6-phosphate isomerase family. NagB subfamily.

The catalysed reaction is alpha-D-glucosamine 6-phosphate + H2O = beta-D-fructose 6-phosphate + NH4(+). Its pathway is amino-sugar metabolism; N-acetylneuraminate degradation; D-fructose 6-phosphate from N-acetylneuraminate: step 5/5. Functionally, catalyzes the reversible isomerization-deamination of glucosamine 6-phosphate (GlcN6P) to form fructose 6-phosphate (Fru6P) and ammonium ion. In Lactococcus lactis subsp. cremoris (strain SK11), this protein is Glucosamine-6-phosphate deaminase.